The chain runs to 770 residues: MRVCVTGFNVDAVRAVAIEETVSQVTGVHAVHAYPRTASVVIWYSPELGDTAAVLSAITKAQHVPAELVPARAPHSAGVRGVGVVRKITGGIRRMLSRPPGVDKPLKASRCGGRPRGPVRGSASWPGEQNRRERRTWLPRVWLALPLGLLALGSSMFFGAYPWAGWLAFAATLPVQFVAGWPILRGAVQQARALTSNMDTLIALGTLTAFVYSTYQLFAGGPLFFDTSALIIAFVVLGRHLEARATGKASEAISKLLELGAKEATLLVDGQELLVPVDQVQVGDLVRVRPGEKIPVDGEVTDGRAAVDESMLTGESVPVEKTAGDRVAGATVNLDGLLTVRATAVGADTALAQIVRLVEQAQGDKAPVQRLADRVSAVFVPAVIGVAVATFAGWTLIAANPVAGMTAAVAVLIIACPCALGLATPTAIMVGTGRGAELGILVKGGEVLEASKKIDTVVFDKTGTLTRARMRVTDVIAGQRRQPDQVLRLAAAVESGSEHPIGAAIVAAAHERGLAIPAANAFTAVAGHGVRAQVNGGPVVVGRRKLVDEQHLVLPDHLAAAAVEQEERGRTAVFVGQDGQVVGVLAVADTVKDDAADVVGRLHAMGLQVAMITGDNARTAAAIAKQVGIEKVLAEVLPQDKVAEVRRLQDQGRVVAMVGDGVNDAPALVQADLGIAIGTGTDVAIEASDITLMSGRLDGVVRAIELSRQTLRTIYQNLGWAFGYNTAAIPLAALGALNPVVAGAAMGFSSVSVVTNSLRLRRFGRDGRTA.

In terms of domain architecture, HMA spans 1–66 (MRVCVTGFNV…AITKAQHVPA (66 aa)). Positions 103 to 130 (DKPLKASRCGGRPRGPVRGSASWPGEQN) are disordered. Low complexity predominate over residues 110 to 121 (RCGGRPRGPVRG). 6 helical membrane-spanning segments follow: residues 141 to 161 (VWLA…FGAY), 164 to 184 (AGWL…WPIL), 193 to 213 (ALTS…FVYS), 217 to 237 (LFAG…FVVL), 377 to 397 (AVFV…WTLI), and 402 to 422 (VAGM…ALGL). Asp-460 functions as the 4-aspartylphosphate intermediate in the catalytic mechanism. The Mg(2+) site is built by Asp-660 and Asp-664. The next 2 helical transmembrane spans lie at 718-737 (LGWA…LGAL) and 741-760 (VAGA…SLRL).

The protein belongs to the cation transport ATPase (P-type) (TC 3.A.3) family. Type IB subfamily.

It localises to the cell membrane. The enzyme catalyses Cu(+)(in) + ATP + H2O = Cu(+)(out) + ADP + phosphate + H(+). In terms of biological role, necessary for copper homeostasis and likely functions as a copper exporter. Also required for full virulence. The chain is Probable copper-exporting P-type ATPase V (ctpV) from Mycobacterium tuberculosis (strain CDC 1551 / Oshkosh).